A 31-amino-acid polypeptide reads, in one-letter code: M-poneritoxin-Nc3b (31 aa).

The protein belongs to the ponericin-G family. As to expression, expressed by the venom gland.

It localises to the secreted. The protein resides in the target cell membrane. Its function is as follows. Membrane-perturbating peptide with a few moderate activities. It is insecticidal, since it induces reversible paralysis in insects (L.cuprina) after 1 hour, but fails to kill them. It is also antiparasitic, since it moderately inhibits the larval development of the major pathogenic nematode of ruminants (H.contortus, IC(50)=23.2 uM) and reduces the motility of adult males of the other nematode B.malayi. It does not show antibacterial activity (MIC&gt;40 uM). It is not cytotoxic to HEK293 cells and does not induce hemolysis in human erythrocytes. It does not cause an increase in intracellular calcium concentration on neuronal and epithelial cell lines. This is M-poneritoxin-Nc3b from Neoponera commutata (Large hunting ant).